The following is a 372-amino-acid chain: Segmentation polarity homeobox protein engrailed (372 aa).

Disordered stretches follow at residues 1–35, 47–112, 196–246, and 261–286; these read MAFEDRCSPSQANSPGPVTGRVPAPHAETLAYSPQ, YERG…LQPT, ERLS…QSNP, and DRPSSGPRSRRVKKKAAPEEKRPRTA. 2 stretches are compositionally biased toward basic and acidic residues: residues 79–105 and 197–215; these read DYYRPETPDVKPHFSREEQRFELDRSR and RLSRDREPPKSLEQQKRPD. The segment covering 216-244 has biased composition (low complexity); the sequence is SASSIVSSTSSGAVSTCGSSDASSIQSQS. The homeobox DNA-binding region spans 280-339; the sequence is EKRPRTAFSGAQLARLKHEFAENRYLTERRRQSLAAELGLAEAQIKIWFQNKRAKIKKAS.

The protein belongs to the engrailed homeobox family. In terms of tissue distribution, expressed in the middle silk gland but not in the posterior silk gland during the fourth molt/fifth intermolt period.

It localises to the nucleus. This protein might be involved in the compartmentalization of the silk gland. In Bombyx mori (Silk moth), this protein is Segmentation polarity homeobox protein engrailed (en).